A 623-amino-acid polypeptide reads, in one-letter code: Low affinity potassium transport system protein Kup (623 aa).

Helical transmembrane passes span 9 to 29 (LPAITLAAIGVVYGDIGTSPL), 49 to 69 (VFGFLSLIFWLLVFVVSFKYL), 101 to 121 (VLVILGLIGGSFFYGEVVITP), 137 to 157 (PSLDPYIVPLSIVVLTLLFMI), 163 to 183 (GMVGKLFAPIMLAWFLVLAVL), 212 to 232 (AVSFAALGAVVLSITGVEALY), 247 to 267 (WFSVVLPSLVLNYFGQGALLL), 276 to 296 (PFFLLAPDWALIPMLILATLA), 337 to 357 (IYIPVVNWLLYFAVVIVIVSF), 363 to 383 (LAAAYGIAVTGTMVLTSILFA), 395 to 415 (ILVGLMVVAFLCVDVPLFSAN), and 419 to 439 (LFSGGWLPLSLGLVMFIIMTT).

This sequence belongs to the HAK/KUP transporter (TC 2.A.72) family.

The protein localises to the cell inner membrane. The enzyme catalyses K(+)(in) + H(+)(in) = K(+)(out) + H(+)(out). Its function is as follows. Responsible for the low-affinity transport of potassium into the cell. Likely operates as a K(+):H(+) symporter. The polypeptide is Low affinity potassium transport system protein Kup (Cronobacter sakazakii (strain ATCC BAA-894) (Enterobacter sakazakii)).